Reading from the N-terminus, the 562-residue chain is MTNSSATSNPQPSDVEIAQAHTLEPITTIAERAGIPEAALIPYGRTKAKIDVPALRAEREGVNKKGKLVLVTAMSPTPAGEGKSTVLIGLADAVRTAGRQTMVAIREPSQGPVMGIKGGAAGGGYAQIVPMEDINLHFTGDMHAITAATNTLAAMVDNHVQHGNALGIDPRRVTWRRCLDVNDRSLRHVVTGLGGPGQGTPREGGFDITAASEIMAILCLATDLEDLKKRIGRIVVGQTYDRRPVTAGDLKCAGAITALLRDAINPNLVQTLGGTPALVHGGPFANIAHGCNSLIATTTALDLSEVVLTEAGFGSDLGAEKFFDIKSRAGDLDVAATVVVATIRSLKHNGDSVLKAGLANLERHVSNIRKFGVEPVVALNLFSSDTAAERSMVADWGEQFGVRVVECSVWAEGGAGAADLATAVLEVVDGVSDEDASSSSHQIYQPVDGVEATLHTLATEIYGAADVQFGPQALKDLAFLKDNGWDKLPVCVSKTQYSFSDDPSALGAPSGHTLHVRELVPRIGAGFVVALTGDVMTLPGLPKKPAAERIDVNAQGVISGLF.

T77–S84 is a binding site for ATP.

The protein belongs to the formate--tetrahydrofolate ligase family.

It carries out the reaction (6S)-5,6,7,8-tetrahydrofolate + formate + ATP = (6R)-10-formyltetrahydrofolate + ADP + phosphate. The protein operates within one-carbon metabolism; tetrahydrofolate interconversion. This is Formate--tetrahydrofolate ligase from Corynebacterium jeikeium (strain K411).